A 191-amino-acid chain; its full sequence is Thymidylate kinase (191 aa).

Residue 7–14 participates in ATP binding; sequence GIDTAGKS.

It belongs to the thymidylate kinase family.

It catalyses the reaction dTMP + ATP = dTDP + ADP. In terms of biological role, phosphorylation of dTMP to form dTDP in both de novo and salvage pathways of dTTP synthesis. The chain is Thymidylate kinase from Sulfurimonas denitrificans (strain ATCC 33889 / DSM 1251) (Thiomicrospira denitrificans (strain ATCC 33889 / DSM 1251)).